We begin with the raw amino-acid sequence, 293 residues long: Mating-type protein A-1 (293 aa).

A DNA-binding region (alpha box) is located at residues 42 to 97 (AAKKKVNGFMGFRSYYSPLFSQLPQKERSPFMTILWQHDPFHNEWDFMCSVYSSIR).

The protein belongs to the MATALPHA1 family.

It is found in the nucleus. In terms of biological role, mating type proteins are sequence specific DNA-binding proteins that act as master switches in yeast differentiation by controlling gene expression in a cell type-specific fashion. Transcriptional activator that induces the transcription of A-specific genes like mating factor ccg-4. Required for mating as an A-cell and for blocking of heterokaryon formation (vegetative incompatibility). The sequence is that of Mating-type protein A-1 (mtA-1) from Neurospora crassa (strain ATCC 24698 / 74-OR23-1A / CBS 708.71 / DSM 1257 / FGSC 987).